The sequence spans 325 residues: L-lactate dehydrogenase (325 aa).

NAD(+) contacts are provided by residues Val19, Asp40, Lys45, Tyr70, and 84-85 (GA). 2 residues coordinate substrate: Gln87 and Arg93. Residues Thr106, 123–125 (AAN), and Ser148 contribute to the NAD(+) site. Substrate is bound at residue 125–128 (NPVD). 153–156 (DSAR) is a substrate binding site. Residues Arg158 and His173 each contribute to the beta-D-fructose 1,6-bisphosphate site. Residue His180 is the Proton acceptor of the active site. At Tyr225 the chain carries Phosphotyrosine. A substrate-binding site is contributed by Thr234.

This sequence belongs to the LDH/MDH superfamily. LDH family. Homotetramer.

Its subcellular location is the cytoplasm. It carries out the reaction (S)-lactate + NAD(+) = pyruvate + NADH + H(+). The protein operates within fermentation; pyruvate fermentation to lactate; (S)-lactate from pyruvate: step 1/1. Its activity is regulated as follows. Allosterically activated by fructose 1,6-bisphosphate (FBP). In terms of biological role, catalyzes the conversion of lactate to pyruvate. The sequence is that of L-lactate dehydrogenase from Latilactobacillus sakei subsp. sakei (strain 23K) (Lactobacillus sakei subsp. sakei).